Here is a 274-residue protein sequence, read N- to C-terminus: Kit ligand (274 aa).

The N-terminal stretch at 1–25 (MKKTQTWIITCIYLQLLLFNPLVKT) is a signal peptide. Over 26–215 (KGICENRVTD…SNFTGDSNLQ (190 aa)) the chain is Extracellular. Disulfide bonds link Cys29-Cys114 and Cys68-Cys164. N-linked (GlcNAc...) asparagine glycans are attached at residues Asn90, Asn97, Asn145, Asn196, and Asn207. A helical transmembrane segment spans residues 216 to 238 (WAAMALPAFFSLVIGFAFGALYW). Residues 239-274 (KKKQPNLTRAVENIQINEEDNEISMLQEKEREFQEV) are Cytoplasmic-facing.

It belongs to the SCF family. As to quaternary structure, homodimer, non-covalently linked. A soluble form is produced by proteolytic processing of the extracellular domain.

Its subcellular location is the cytoplasm. It is found in the cytoskeleton. The protein localises to the cell membrane. It localises to the cell projection. The protein resides in the lamellipodium. Its subcellular location is the filopodium. It is found in the secreted. Functionally, stimulates the proliferation of mast cells. Able to augment the proliferation of both myeloid and lymphoid hematopoietic progenitors in bone marrow culture. Also mediates cell-cell adhesion. Acts synergistically with other cytokines, probably interleukins. The chain is Kit ligand (KITLG) from Equus caballus (Horse).